Consider the following 63-residue polypeptide: Large ribosomal subunit protein uL29 (63 aa).

This sequence belongs to the universal ribosomal protein uL29 family.

This Idiomarina loihiensis (strain ATCC BAA-735 / DSM 15497 / L2-TR) protein is Large ribosomal subunit protein uL29.